Here is a 491-residue protein sequence, read N- to C-terminus: Lysine--tRNA ligase (491 aa).

Residues glutamate 400 and glutamate 407 each contribute to the Mg(2+) site.

It belongs to the class-II aminoacyl-tRNA synthetase family. Homodimer. Mg(2+) is required as a cofactor.

Its subcellular location is the cytoplasm. The catalysed reaction is tRNA(Lys) + L-lysine + ATP = L-lysyl-tRNA(Lys) + AMP + diphosphate. This Mesomycoplasma hyopneumoniae (strain 7448) (Mycoplasma hyopneumoniae) protein is Lysine--tRNA ligase.